Here is a 394-residue protein sequence, read N- to C-terminus: Cell division protein FtsZ (394 aa).

Residues 21 to 25 (GGGNN), R29, 108 to 110 (GTG), E139, R143, N166, and D187 each bind GTP. The disordered stretch occupies residues 317 to 394 (DKPSSQGRKA…EERRSRRTRR (78 aa)). Composition is skewed to low complexity over residues 328-346 (STGF…SGAS) and 353-364 (SAHTSHSQSSES). Residues 365 to 388 (VSERSHTTKDDDIPSFIRNREERR) show a composition bias toward basic and acidic residues.

The protein belongs to the FtsZ family. In terms of assembly, homodimer. Polymerizes to form a dynamic ring structure in a strictly GTP-dependent manner. Interacts directly with several other division proteins.

It is found in the cytoplasm. In terms of biological role, essential cell division protein that forms a contractile ring structure (Z ring) at the future cell division site. The regulation of the ring assembly controls the timing and the location of cell division. One of the functions of the FtsZ ring is to recruit other cell division proteins to the septum to produce a new cell wall between the dividing cells. Binds GTP and shows GTPase activity. This is Cell division protein FtsZ from Staphylococcus epidermidis (strain ATCC 35984 / DSM 28319 / BCRC 17069 / CCUG 31568 / BM 3577 / RP62A).